The following is a 299-amino-acid chain: HTH-type transcriptional regulator ArgP (299 aa).

Positions 2-58 (FDYKLLSALAAVIEQAGFERAAQVLGLSQSAISQRIKLLEARVGQPVLVRVTPPAPT) constitute an HTH lysR-type domain. Positions 19–38 (FERAAQVLGLSQSAISQRIK) form a DNA-binding region, H-T-H motif.

It belongs to the LysR transcriptional regulatory family. As to quaternary structure, homodimer.

Its function is as follows. Controls the transcription of genes involved in arginine and lysine metabolism. The sequence is that of HTH-type transcriptional regulator ArgP from Pseudomonas fluorescens (strain ATCC BAA-477 / NRRL B-23932 / Pf-5).